The sequence spans 252 residues: ATP synthase subunit a (252 aa).

The next 6 membrane-spanning stretches (helical) occupy residues 29-49 (FTNS…FLFL), 87-107 (FFPL…LGLF), 117-137 (IIVT…YGFM), 146-166 (LFVP…IEVI), 188-208 (ITLK…AVGV), and 211-231 (SILP…VAFL).

It belongs to the ATPase A chain family. In terms of assembly, F-type ATPases have 2 components, CF(1) - the catalytic core - and CF(0) - the membrane proton channel. CF(1) has five subunits: alpha(3), beta(3), gamma(1), delta(1), epsilon(1). CF(0) has three main subunits: a(1), b(2) and c(9-12). The alpha and beta chains form an alternating ring which encloses part of the gamma chain. CF(1) is attached to CF(0) by a central stalk formed by the gamma and epsilon chains, while a peripheral stalk is formed by the delta and b chains.

It is found in the cell inner membrane. Its function is as follows. Key component of the proton channel; it plays a direct role in the translocation of protons across the membrane. The polypeptide is ATP synthase subunit a (Mesorhizobium japonicum (strain LMG 29417 / CECT 9101 / MAFF 303099) (Mesorhizobium loti (strain MAFF 303099))).